Reading from the N-terminus, the 196-residue chain is Imidazoleglycerol-phosphate dehydratase (196 aa).

The protein belongs to the imidazoleglycerol-phosphate dehydratase family.

Its subcellular location is the cytoplasm. The catalysed reaction is D-erythro-1-(imidazol-4-yl)glycerol 3-phosphate = 3-(imidazol-4-yl)-2-oxopropyl phosphate + H2O. Its pathway is amino-acid biosynthesis; L-histidine biosynthesis; L-histidine from 5-phospho-alpha-D-ribose 1-diphosphate: step 6/9. The sequence is that of Imidazoleglycerol-phosphate dehydratase from Caulobacter sp. (strain K31).